Here is a 406-residue protein sequence, read N- to C-terminus: Phosphopentomutase (406 aa).

Mn(2+) contacts are provided by Asp10, Asp305, His310, Asp346, His347, and His358.

It belongs to the phosphopentomutase family. Mn(2+) is required as a cofactor.

It localises to the cytoplasm. It catalyses the reaction 2-deoxy-alpha-D-ribose 1-phosphate = 2-deoxy-D-ribose 5-phosphate. It carries out the reaction alpha-D-ribose 1-phosphate = D-ribose 5-phosphate. The protein operates within carbohydrate degradation; 2-deoxy-D-ribose 1-phosphate degradation; D-glyceraldehyde 3-phosphate and acetaldehyde from 2-deoxy-alpha-D-ribose 1-phosphate: step 1/2. Its function is as follows. Isomerase that catalyzes the conversion of deoxy-ribose 1-phosphate (dRib-1-P) and ribose 1-phosphate (Rib-1-P) to deoxy-ribose 5-phosphate (dRib-5-P) and ribose 5-phosphate (Rib-5-P), respectively. The protein is Phosphopentomutase of Sinorhizobium fredii (strain NBRC 101917 / NGR234).